A 197-amino-acid polypeptide reads, in one-letter code: HTH-type transcriptional regulator BetI (197 aa).

The region spanning Pro-8 to Leu-68 is the HTH tetR-type domain. Positions Ser-31–Phe-50 form a DNA-binding region, H-T-H motif.

It participates in amine and polyamine biosynthesis; betaine biosynthesis via choline pathway [regulation]. Repressor involved in the biosynthesis of the osmoprotectant glycine betaine. It represses transcription of the choline transporter BetT and the genes of BetAB involved in the synthesis of glycine betaine. This chain is HTH-type transcriptional regulator BetI, found in Pseudomonas fluorescens (strain ATCC BAA-477 / NRRL B-23932 / Pf-5).